Reading from the N-terminus, the 238-residue chain is Cysteine-rich venom protein 2 (238 aa).

An N-terminal signal peptide occupies residues 1–19 (MIAFIVLLSLAAVLQQSSG). One can recognise an SCP domain in the interval 38–164 (VDKHNALRRS…STKYLYVCQY (127 aa)). 8 disulfide bridges follow: Cys-75–Cys-153, Cys-92–Cys-165, Cys-148–Cys-162, Cys-184–Cys-191, Cys-187–Cys-196, Cys-200–Cys-233, Cys-209–Cys-227, and Cys-218–Cys-231. Residues 200-233 (CEYEDAYTNCNDLVKERKCQTEWIKSQCPATCFC) form the ShKT domain.

This sequence belongs to the CRISP family. In terms of tissue distribution, expressed by the venom gland.

It is found in the secreted. Blocks contraction of smooth muscle elicited by high potassium-induced depolarization, but does not block caffeine-stimulated contraction. May target voltage-gated calcium channels (Cav) on smooth muscle. This is Cysteine-rich venom protein 2 from Hydrophis hardwickii (Hardwick's spine-bellied seasnake).